A 179-amino-acid polypeptide reads, in one-letter code: uncharacterized protein (179 aa).

Positions 26 to 39 (AAKLAAATTPTHTA) are enriched in low complexity. The disordered stretch occupies residues 26–179 (AAKLAAATTP…RPRRNTLRHM (154 aa)). Residues 150-165 (RQSVTQSTAARQTQPH) show a composition bias toward polar residues. Positions 167–179 (GRPRPRRNTLRHM) are enriched in basic residues.

This is an uncharacterized protein from Equus caballus (Horse).